Here is a 255-residue protein sequence, read N- to C-terminus: Type III pantothenate kinase (255 aa).

Residue D6 to V13 coordinates ATP. Residues Y100 and G107–R110 contribute to the substrate site. D109 (proton acceptor) is an active-site residue. D129 is a binding site for K(+). An ATP-binding site is contributed by T132. T184 is a binding site for substrate.

Belongs to the type III pantothenate kinase family. In terms of assembly, homodimer. NH4(+) serves as cofactor. It depends on K(+) as a cofactor.

The protein localises to the cytoplasm. The catalysed reaction is (R)-pantothenate + ATP = (R)-4'-phosphopantothenate + ADP + H(+). It participates in cofactor biosynthesis; coenzyme A biosynthesis; CoA from (R)-pantothenate: step 1/5. In terms of biological role, catalyzes the phosphorylation of pantothenate (Pan), the first step in CoA biosynthesis. The polypeptide is Type III pantothenate kinase (Acetivibrio thermocellus (strain ATCC 27405 / DSM 1237 / JCM 9322 / NBRC 103400 / NCIMB 10682 / NRRL B-4536 / VPI 7372) (Clostridium thermocellum)).